Reading from the N-terminus, the 503-residue chain is Maturase K (503 aa).

It belongs to the intron maturase 2 family. MatK subfamily.

It is found in the plastid. It localises to the chloroplast. Functionally, usually encoded in the trnK tRNA gene intron. Probably assists in splicing its own and other chloroplast group II introns. The chain is Maturase K from Stangeria eriopus (Natal grass cycad).